We begin with the raw amino-acid sequence, 316 residues long: Palmitoyltransferase ZDHHC3-A (316 aa).

The Cytoplasmic portion of the chain corresponds to M1–C45. Residues A46 to I66 traverse the membrane as a helical segment. Residues P67 to N70 lie on the Lumenal side of the membrane. Residues L71 to S91 form a helical membrane-spanning segment. Over H92–Y169 the chain is Cytoplasmic. One can recognise a DHHC domain in the interval V124–M175. Residue C144 is the site of S-palmitoyl cysteine attachment. C155 functions as the S-palmitoyl cysteine intermediate in the catalytic mechanism. Residues F170–F190 form a helical membrane-spanning segment. At H191–V212 the chain is on the lumenal side. A helical transmembrane segment spans residues I213–F233. Topologically, residues G234–H316 are cytoplasmic.

It belongs to the DHHC palmitoyltransferase family. As to quaternary structure, monomer. Homooligomers. The monomeric form has a higher catalytic activity. Forms heterooligomers with zdhhc7. Post-translationally, autopalmitoylated.

The protein localises to the golgi apparatus membrane. It carries out the reaction L-cysteinyl-[protein] + hexadecanoyl-CoA = S-hexadecanoyl-L-cysteinyl-[protein] + CoA. The catalysed reaction is L-cysteinyl-[protein] + tetradecanoyl-CoA = S-tetradecanoyl-L-cysteinyl-[protein] + CoA. The enzyme catalyses L-cysteinyl-[protein] + octadecanoyl-CoA = S-octadecanoyl-L-cysteinyl-[protein] + CoA. In terms of biological role, golgi-localized palmitoyltransferase that catalyzes the addition of palmitate onto various protein substrates and regulates their association with membranes. Has no stringent fatty acid selectivity and in addition to palmitate can also transfer onto target proteins myristate from tetradecanoyl-CoA and stearate from octadecanoyl-CoA. The protein is Palmitoyltransferase ZDHHC3-A (zdhhc3a) of Danio rerio (Zebrafish).